A 427-amino-acid polypeptide reads, in one-letter code: UPF0597 protein CPR_0790 (427 aa).

It belongs to the UPF0597 family.

This is UPF0597 protein CPR_0790 from Clostridium perfringens (strain SM101 / Type A).